A 701-amino-acid polypeptide reads, in one-letter code: 2-isopropylmalate synthase (701 aa).

The interval 1 to 40 is disordered; the sequence is MTTSESPDAYTESFGAHTIVKPAGPPRVGQPSWNPQRASS. A compositionally biased stretch (polar residues) spans 31–40; it reads PSWNPQRASS. The Pyruvate carboxyltransferase domain occupies 72–346; sequence PLWCAVDLRD…DPQIDFSNID (275 aa). Mg(2+) is bound by residues aspartate 81, histidine 285, histidine 287, and asparagine 321. The tract at residues 491–701 is regulatory domain; sequence PVRPLERIRQ…VVSAVNRAAR (211 aa). The VNTR1 repeat unit spans residues 575–593; the sequence is VTIASPAQPGEAGRHASDP. The segment at 581 to 670 is disordered; it reads AQPGEAGRHA…EAGRHASDPV (90 aa). One copy of the VNTR2 repeat lies at 594-612; the sequence is VTIASPAQPGEAGRHASDP. The VNTR3 repeat unit spans residues 613 to 631; the sequence is VTIASPAQPGEAGRHASDP. One copy of the VNTR4 repeat lies at 632 to 650; it reads VTIASPAQPGEAGRHASDP. One copy of the VNTR5 repeat lies at 651-669; the sequence is VTIASPAQPGEAGRHASDP.

This sequence belongs to the alpha-IPM synthase/homocitrate synthase family. LeuA type 2 subfamily. Homodimer. The cofactor is Mg(2+).

It is found in the cytoplasm. It carries out the reaction 3-methyl-2-oxobutanoate + acetyl-CoA + H2O = (2S)-2-isopropylmalate + CoA + H(+). It participates in amino-acid biosynthesis; L-leucine biosynthesis; L-leucine from 3-methyl-2-oxobutanoate: step 1/4. Functionally, catalyzes the condensation of the acetyl group of acetyl-CoA with 3-methyl-2-oxobutanoate (2-ketoisovalerate) to form 3-carboxy-3-hydroxy-4-methylpentanoate (2-isopropylmalate). The chain is 2-isopropylmalate synthase from Mycobacterium bovis (strain ATCC BAA-935 / AF2122/97).